The primary structure comprises 458 residues: UPF0210 protein MMP1427 (458 aa).

This sequence belongs to the UPF0210 family.

This chain is UPF0210 protein MMP1427, found in Methanococcus maripaludis (strain DSM 14266 / JCM 13030 / NBRC 101832 / S2 / LL).